Consider the following 1396-residue polypeptide: DNA-directed RNA polymerase subunit beta' (1396 aa).

The Zn(2+) site is built by C72, C74, C87, and C90. The Mg(2+) site is built by D463, D465, and D467. 4 residues coordinate Zn(2+): C814, C889, C896, and C899.

It belongs to the RNA polymerase beta' chain family. The RNAP catalytic core consists of 2 alpha, 1 beta, 1 beta' and 1 omega subunit. When a sigma factor is associated with the core the holoenzyme is formed, which can initiate transcription. Mg(2+) is required as a cofactor. Requires Zn(2+) as cofactor.

The enzyme catalyses RNA(n) + a ribonucleoside 5'-triphosphate = RNA(n+1) + diphosphate. Its function is as follows. DNA-dependent RNA polymerase catalyzes the transcription of DNA into RNA using the four ribonucleoside triphosphates as substrates. This Chlamydia muridarum (strain MoPn / Nigg) protein is DNA-directed RNA polymerase subunit beta'.